A 518-amino-acid polypeptide reads, in one-letter code: Protein FAM98A (518 aa).

Disordered regions lie at residues V297–S415 and G434–S518. Residues V302 to E311 are compositionally biased toward basic and acidic residues. Composition is skewed to gly residues over residues G349 to G364, W383 to D396, and Q405 to S415. Positions R447–G459 are enriched in basic and acidic residues. Positions G460–G484 are enriched in gly residues. A compositionally biased stretch (low complexity) spans Y488–Q504. Over residues Y505–S518 the composition is skewed to polar residues.

The protein belongs to the FAM98 family. As to quaternary structure, interacts (via N- and C-terminus) with DDX1. Interacts (via N- and C-terminus) with C14orf166. Interacts with FAM98B. Interacts with PLEKHM1 (via N- and C-terminus). As to expression, expressed strongly in colorectal cancer cells. Expressed strongly in colorectal cancer tissues compared to wild-type colon samples (at protein level). Expressed strongly in colorectal cancer tissues compared to wild-type colon samples.

Its function is as follows. Positively stimulates PRMT1-induced protein arginine methylation. Involved in skeletal homeostasis. Positively regulates lysosome peripheral distribution and ruffled border formation in osteoclasts. This chain is Protein FAM98A, found in Homo sapiens (Human).